The following is a 539-amino-acid chain: Putative dimethylaniline monooxygenase [N-oxide-forming] 6 (539 aa).

FAD is bound by residues 9–13, Glu-32, 40–41, and 61–62; these read GAGVS, LW, and NS. Residue 195-198 coordinates NADP(+); it reads SGSD. A helical membrane pass occupies residues 518–538; that stretch reads FYNLLKMLSFPLLLLAVTLTF.

This sequence belongs to the FMO family. It depends on FAD as a cofactor.

Its subcellular location is the microsome membrane. It is found in the endoplasmic reticulum membrane. It carries out the reaction N,N-dimethylaniline + NADPH + O2 + H(+) = N,N-dimethylaniline N-oxide + NADP(+) + H2O. Functionally, it is probable that this protein is only produced in very small quantity or not at all as the gene coding for it seems to be unable to produce full-length transcripts. This Homo sapiens (Human) protein is Putative dimethylaniline monooxygenase [N-oxide-forming] 6 (FMO6P).